The chain runs to 379 residues: UDP-N-acetylglucosamine--N-acetylmuramyl-(pentapeptide) pyrophosphoryl-undecaprenol N-acetylglucosamine transferase (379 aa).

UDP-N-acetyl-alpha-D-glucosamine contacts are provided by residues 17 to 19, asparagine 128, arginine 169, serine 197, and glutamine 298; that span reads TGG.

It belongs to the glycosyltransferase 28 family. MurG subfamily.

It is found in the cell inner membrane. The catalysed reaction is di-trans,octa-cis-undecaprenyl diphospho-N-acetyl-alpha-D-muramoyl-L-alanyl-D-glutamyl-meso-2,6-diaminopimeloyl-D-alanyl-D-alanine + UDP-N-acetyl-alpha-D-glucosamine = di-trans,octa-cis-undecaprenyl diphospho-[N-acetyl-alpha-D-glucosaminyl-(1-&gt;4)]-N-acetyl-alpha-D-muramoyl-L-alanyl-D-glutamyl-meso-2,6-diaminopimeloyl-D-alanyl-D-alanine + UDP + H(+). The protein operates within cell wall biogenesis; peptidoglycan biosynthesis. In terms of biological role, cell wall formation. Catalyzes the transfer of a GlcNAc subunit on undecaprenyl-pyrophosphoryl-MurNAc-pentapeptide (lipid intermediate I) to form undecaprenyl-pyrophosphoryl-MurNAc-(pentapeptide)GlcNAc (lipid intermediate II). The sequence is that of UDP-N-acetylglucosamine--N-acetylmuramyl-(pentapeptide) pyrophosphoryl-undecaprenol N-acetylglucosamine transferase from Brucella suis (strain ATCC 23445 / NCTC 10510).